Consider the following 218-residue polypeptide: Phosphoglycolate phosphatase (218 aa).

D7 acts as the Nucleophile in catalysis. The Mg(2+) site is built by D7, D9, and D167.

This sequence belongs to the HAD-like hydrolase superfamily. CbbY/CbbZ/Gph/YieH family. Mg(2+) is required as a cofactor.

It carries out the reaction 2-phosphoglycolate + H2O = glycolate + phosphate. It participates in organic acid metabolism; glycolate biosynthesis; glycolate from 2-phosphoglycolate: step 1/1. In terms of biological role, specifically catalyzes the dephosphorylation of 2-phosphoglycolate. Is involved in the dissimilation of the intracellular 2-phosphoglycolate formed during the DNA repair of 3'-phosphoglycolate ends, a major class of DNA lesions induced by oxidative stress. The polypeptide is Phosphoglycolate phosphatase (Cereibacter sphaeroides (Rhodobacter sphaeroides)).